Consider the following 548-residue polypeptide: Chaperonin GroEL (548 aa).

ATP-binding positions include 29–32, Lys50, 86–90, Gly413, 479–481, and Asp496; these read TLGP, DGTTT, and NAA.

Belongs to the chaperonin (HSP60) family. As to quaternary structure, forms a cylinder of 14 subunits composed of two heptameric rings stacked back-to-back. Interacts with the co-chaperonin GroES.

The protein localises to the cytoplasm. It carries out the reaction ATP + H2O + a folded polypeptide = ADP + phosphate + an unfolded polypeptide.. Its function is as follows. Together with its co-chaperonin GroES, plays an essential role in assisting protein folding. The GroEL-GroES system forms a nano-cage that allows encapsulation of the non-native substrate proteins and provides a physical environment optimized to promote and accelerate protein folding. This Deinococcus radiodurans (strain ATCC 13939 / DSM 20539 / JCM 16871 / CCUG 27074 / LMG 4051 / NBRC 15346 / NCIMB 9279 / VKM B-1422 / R1) protein is Chaperonin GroEL.